An 865-amino-acid chain; its full sequence is Protein translocase subunit SecA (865 aa).

Residues Gln-93, 111-115 (GEGKT), and Asp-501 each bind ATP. Residues Cys-841, Cys-843, Cys-852, and Cys-853 each coordinate Zn(2+).

Belongs to the SecA family. Monomer and homodimer. Part of the essential Sec protein translocation apparatus which comprises SecA, SecYEG and auxiliary proteins SecDF-YajC and YidC. Requires Zn(2+) as cofactor.

It localises to the cell inner membrane. It is found in the cytoplasm. It catalyses the reaction ATP + H2O + cellular proteinSide 1 = ADP + phosphate + cellular proteinSide 2.. In terms of biological role, part of the Sec protein translocase complex. Interacts with the SecYEG preprotein conducting channel. Has a central role in coupling the hydrolysis of ATP to the transfer of proteins into and across the cell membrane, serving as an ATP-driven molecular motor driving the stepwise translocation of polypeptide chains across the membrane. The protein is Protein translocase subunit SecA of Helicobacter acinonychis (strain Sheeba).